The primary structure comprises 249 residues: Coproheme decarboxylase (249 aa).

Fe-coproporphyrin III contacts are provided by residues Arg131, 145-149 (YPMDK), His172, Gln185, and Ser223. Tyr145 is a catalytic residue.

Belongs to the ChdC family. Type 1 subfamily. The cofactor is Fe-coproporphyrin III.

The enzyme catalyses Fe-coproporphyrin III + 2 H2O2 + 2 H(+) = heme b + 2 CO2 + 4 H2O. The catalysed reaction is Fe-coproporphyrin III + H2O2 + H(+) = harderoheme III + CO2 + 2 H2O. It catalyses the reaction harderoheme III + H2O2 + H(+) = heme b + CO2 + 2 H2O. It participates in porphyrin-containing compound metabolism; protoheme biosynthesis. Involved in coproporphyrin-dependent heme b biosynthesis. Catalyzes the decarboxylation of Fe-coproporphyrin III (coproheme) to heme b (protoheme IX), the last step of the pathway. The reaction occurs in a stepwise manner with a three-propionate intermediate. The protein is Coproheme decarboxylase of Halalkalibacterium halodurans (strain ATCC BAA-125 / DSM 18197 / FERM 7344 / JCM 9153 / C-125) (Bacillus halodurans).